The primary structure comprises 816 residues: Protein kinase C-binding protein NELL2 (816 aa).

The N-terminal stretch at 1-21 is a signal peptide; the sequence is MESRVLLRTFCLIFGLGAVWG. Residues Asn53, Asn225, Asn293, and Asn298 are each glycosylated (N-linked (GlcNAc...) asparagine). A Laminin G-like domain is found at 64–228; that stretch reads PRSIKASTAT…AQCPDLNRTC (165 aa). Positions 272–331 constitute a VWFC 1 domain; the sequence is RTCTMKGTTYREFESWIDGCKNCTCLNGTIQCETLICPNPDCPLKSALAYVDGKCCKECK. The 43-residue stretch at 397–439 folds into the EGF-like 1 domain; sequence GYDFCSERHNCMENSICRNLNDRAVCSCRDGFRALREDNAYCE. 3 disulfide bridges follow: Cys401-Cys413, Cys407-Cys422, and Cys424-Cys438. Ca(2+)-binding residues include Asp440, Ile441, and Glu443. Residues 440 to 481 form the EGF-like 2; calcium-binding domain; sequence DIDECAEGRHYCRENTMCVNTPGSFMCICKTGYIRIDDYSCT. 9 disulfide bridges follow: Cys444–Cys457, Cys451–Cys466, Cys468–Cys480, Cys486–Cys499, Cys493–Cys508, Cys510–Cys521, Cys525–Cys535, Cys529–Cys541, and Cys543–Cys552. Residues Asn459, Thr460, and Ser463 each contribute to the Ca(2+) site. The region spanning 482-522 is the EGF-like 3; calcium-binding domain; sequence EHDECITNQHNCDENALCFNTVGGHNCVCKPGYTGNGTTCK. Asn517 carries an N-linked (GlcNAc...) asparagine glycan. One can recognise an EGF-like 4 domain in the interval 523–553; that stretch reads AFCKDGCRNGGACIAANVCACPQGFTGPSCE. Thr548 carries O-linked (GlcNAc...) threonine glycosylation. The Ca(2+) site is built by Asp555, Ile556, and Glu558. The EGF-like 5; calcium-binding domain maps to 555 to 601; the sequence is DIDECSDGFVQCDSRANCINLPGWYHCECRDGYHDNGMFSPSGESCE. 3 disulfide bridges follow: Cys559–Cys572, Cys566–Cys581, and Cys583–Cys600. Residues Asn574, Leu575, and Trp578 each contribute to the Ca(2+) site. Ca(2+)-binding residues include Asp602, Ile603, and Glu605. An EGF-like 6; calcium-binding domain is found at 602-637; sequence DIDECGTGRHSCANDTICFNLDGGYDCRCPHGKNCT. Cystine bridges form between Cys606–Cys619, Cys613–Cys628, and Cys630–Cys636. N-linked (GlcNAc...) asparagine glycosylation occurs at Asn615. The Ca(2+) site is built by Asn621, Leu622, and Gly625. Asn635 carries N-linked (GlcNAc...) asparagine glycosylation. VWFC domains lie at 638 to 693 and 698 to 756; these read GDCI…PECD and SQCL…PRCV.

Homotrimer. Binds to PRKCB. Interacts with NICOL1; this interaction triggers epididymal differentiation. Interacts (via the EGF domains) with ROBO3 (via Fibronectin type-III 1 domain) with a 3:3 stoichiometry; this interaction promotes oligomerization of ROBO3 resulting in the repulsion of commissural axons in the midline.

The protein localises to the secreted. Functionally, plays multiple roles in neural tissues, regulates neuronal proliferation, survival, differentiation, polarization, as well as axon guidance and synaptic functions. Plays an important role in axon development during neuronal differentiation through the MAPK intracellular signaling pathway. Via binding to its receptor ROBO3, plays a role in axon guidance, functioning as a repulsive axon guidance cue that contributes to commissural axon guidance to the midline. Required for neuron survival through the modulation of MAPK signaling pathways too. Involved in the regulation of hypothalamic GNRH secretion and the control of puberty. In terms of biological role, epididymal-secreted protein that signals through a ROS1-pathway to regulate the epididymal initial segment (IS) maturation, sperm maturation and male fertility. This is Protein kinase C-binding protein NELL2 from Homo sapiens (Human).